Here is a 133-residue protein sequence, read N- to C-terminus: Small ribosomal subunit protein uS8c (133 aa).

Belongs to the universal ribosomal protein uS8 family. As to quaternary structure, part of the 30S ribosomal subunit.

The protein localises to the plastid. It localises to the chloroplast. One of the primary rRNA binding proteins, it binds directly to 16S rRNA central domain where it helps coordinate assembly of the platform of the 30S subunit. This Chlorokybus atmophyticus (Soil alga) protein is Small ribosomal subunit protein uS8c (rps8).